Here is a 517-residue protein sequence, read N- to C-terminus: Perilipin-1 (517 aa).

Serine 81 is modified (phosphoserine). At threonine 85 the chain carries Phosphothreonine. 5 positions are modified to phosphoserine: serine 126, serine 130, serine 132, serine 137, and serine 174. The segment at 195-216 (DKESAPSSGRQRTQKAPKAKPS) is disordered. 3 positions are modified to phosphothreonine: threonine 223, threonine 298, and threonine 300. Positions 286–320 (LAASQDESHDDQTDTEGEETDDEEEEEESEAEENV) are disordered. The required for interaction with CIDEC stretch occupies residues 290–321 (QDESHDDQTDTEGEETDDEEEEEESEAEENVL). Residues 298–318 (TDTEGEETDDEEEEEESEAEE) show a composition bias toward acidic residues. A phosphoserine mark is found at serine 314, serine 384, serine 386, serine 410, serine 433, serine 439, serine 460, serine 492, and serine 494. Residues 425–490 (SAEAERKGSG…AMPREKPARR (66 aa)) form a disordered region.

Belongs to the perilipin family. Interacts with ABHD5. Interacts with CIDEC. Interacts with AQP7. Post-translationally, major cAMP-dependent protein kinase-substrate in adipocytes, also dephosphorylated by PP1. When phosphorylated, may be maximally sensitive to HSL and when unphosphorylated, may play a role in the inhibition of lipolysis, by acting as a barrier in lipid droplet.

The protein localises to the endoplasmic reticulum. The protein resides in the lipid droplet. Functionally, modulator of adipocyte lipid metabolism. Coats lipid storage droplets to protect them from breakdown by hormone-sensitive lipase (HSL). Its absence may result in leanness. Plays a role in unilocular lipid droplet formation by activating CIDEC. Their interaction promotes lipid droplet enlargement and directional net neutral lipid transfer. May modulate lipolysis and triglyceride levels. The chain is Perilipin-1 (Plin1) from Mus musculus (Mouse).